We begin with the raw amino-acid sequence, 446 residues long: Methanol utilization control sensor protein MoxY (446 aa).

The next 3 membrane-spanning stretches (helical) occupy residues 1–21 (MGLA…ILIV), 101–121 (WFSA…THYP), and 144–164 (FSII…LAFL). The HAMP domain occupies 167-219 (TLLTRRLQSVQAAMAQMQDGRLSVRAPDDRLTEFADLAAGVNALASHLQAEQA). Residues 390-409 (TDNGKGPQSGTGRPTPGFGQ) are disordered.

The protein localises to the cell inner membrane. In terms of biological role, member of the two-component regulatory system MoxY/MoxX probably involved in the regulation of the methanol dehydrogenase expression. May function as a membrane-associated protein kinase that phosphorylates MoxX in response to environmental signals. The polypeptide is Methanol utilization control sensor protein MoxY (moxY) (Paracoccus denitrificans).